The following is a 358-amino-acid chain: Protein ttm-2 (358 aa).

Belongs to the arrestin family.

Its function is as follows. Involved in resistance to B.thuringiensis pore-forming toxin Cry5B downstream of the sek-1 and pmk-1 MAPK kinase pathway. In Caenorhabditis elegans, this protein is Protein ttm-2.